Here is a 43-residue protein sequence, read N- to C-terminus: Omega-ctenitoxin-Pr1a (43 aa).

4 disulfides stabilise this stretch: Cys2–Cys17, Cys9–Cys22, Cys16–Cys33, and Cys24–Cys31. The residue at position 43 (Gly43) is a Glycine amide.

As to expression, expressed by the venom gland.

Its subcellular location is the secreted. Inhibits high-voltage activated calcium channels. Shifts the voltage-dependence for activation towards hyperpolarized membrane potentials for L- (Cav1), P/Q- (Cav2.1/CACNA1A) and R-type (Cav2.3/CACNA1E) calcium currents. Causes immediate agitation and clockwise gyration, followed by the gradual development of general flaccid paralysis when injected intracerebroventricular into mice at dose levels of 5 ug per mouse. This Phoneutria reidyi (Brazilian Amazonian armed spider) protein is Omega-ctenitoxin-Pr1a.